The chain runs to 343 residues: tRNA N6-adenosine threonylcarbamoyltransferase (343 aa).

Positions 120 and 124 each coordinate Fe cation. Substrate contacts are provided by residues 142–146 (VVSGG), Asp175, Gly188, Asp192, and Asn281. Asp309 serves as a coordination point for Fe cation.

The protein belongs to the KAE1 / TsaD family. Requires Fe(2+) as cofactor.

It localises to the cytoplasm. It carries out the reaction L-threonylcarbamoyladenylate + adenosine(37) in tRNA = N(6)-L-threonylcarbamoyladenosine(37) in tRNA + AMP + H(+). Functionally, required for the formation of a threonylcarbamoyl group on adenosine at position 37 (t(6)A37) in tRNAs that read codons beginning with adenine. Is involved in the transfer of the threonylcarbamoyl moiety of threonylcarbamoyl-AMP (TC-AMP) to the N6 group of A37, together with TsaE and TsaB. TsaD likely plays a direct catalytic role in this reaction. This is tRNA N6-adenosine threonylcarbamoyltransferase from Halalkalibacterium halodurans (strain ATCC BAA-125 / DSM 18197 / FERM 7344 / JCM 9153 / C-125) (Bacillus halodurans).